Consider the following 1529-residue polypeptide: uncharacterized protein (1529 aa).

Residues 1–11 (MDKNNNNNNSN) show a composition bias toward low complexity. Disordered stretches follow at residues 1 to 85 (MDKN…SKGV), 335 to 371 (LLSN…WSSS), 660 to 694 (LPNL…TATA), 798 to 843 (NCNI…SSYS), 1016 to 1035 (SSLP…NTNN), 1334 to 1364 (QQQQ…QLQQ), and 1454 to 1497 (QQQV…SRLP). Positions 24-42 (QKRVQNPSFSSGQSRTVPS) are enriched in polar residues. The span at 51–79 (ISSSSSSSSISTTNNTTTTTTSGTGSTSS) shows a compositional bias: low complexity. A compositionally biased stretch (low complexity) spans 810 to 833 (NNNNNNNNNNNNNNNNNNNNNNNN). Composition is skewed to polar residues over residues 834 to 843 (VLPRSNSSYS) and 1016 to 1027 (SSLPISQNLSDD). The span at 1454 to 1494 (QQQVQTPSSPQTLASLLGNSSSNTLTSSSSTLSLNESSTLS) shows a compositional bias: low complexity.

This is an uncharacterized protein from Dictyostelium discoideum (Social amoeba).